Here is a 144-residue protein sequence, read N- to C-terminus: Large ribosomal subunit protein uL15 (144 aa).

The disordered stretch occupies residues 1 to 53 (MRLNTLSPAEGAKHSAKRLGRGIGSGLGKTGGRGHKGQKSRTGGGVRRGFEGG). The segment covering 21–31 (RGIGSGLGKTG) has biased composition (gly residues).

This sequence belongs to the universal ribosomal protein uL15 family. Part of the 50S ribosomal subunit.

Functionally, binds to the 23S rRNA. In Pasteurella multocida (strain Pm70), this protein is Large ribosomal subunit protein uL15.